The following is a 341-amino-acid chain: Anthranilate phosphoribosyltransferase (341 aa).

5-phospho-alpha-D-ribose 1-diphosphate-binding positions include glycine 79, 82–83 (GD), threonine 87, 89–92 (NIST), 107–115 (KHGNRAASS), and alanine 119. Residue glycine 79 coordinates anthranilate. Serine 91 serves as a coordination point for Mg(2+). Asparagine 110 contacts anthranilate. Arginine 165 provides a ligand contact to anthranilate. Mg(2+) contacts are provided by aspartate 224 and glutamate 225.

Belongs to the anthranilate phosphoribosyltransferase family. As to quaternary structure, homodimer. The cofactor is Mg(2+).

The catalysed reaction is N-(5-phospho-beta-D-ribosyl)anthranilate + diphosphate = 5-phospho-alpha-D-ribose 1-diphosphate + anthranilate. It functions in the pathway amino-acid biosynthesis; L-tryptophan biosynthesis; L-tryptophan from chorismate: step 2/5. Functionally, catalyzes the transfer of the phosphoribosyl group of 5-phosphorylribose-1-pyrophosphate (PRPP) to anthranilate to yield N-(5'-phosphoribosyl)-anthranilate (PRA). In Lacticaseibacillus casei (strain BL23) (Lactobacillus casei), this protein is Anthranilate phosphoribosyltransferase.